The sequence spans 364 residues: Apelin receptor (364 aa).

At 1–39 (MATDEFSSSTTPSYDYYDYTNESGLPPCDETDWDLSYSL) the chain is on the extracellular side. Asparagine 21 carries an N-linked (GlcNAc...) asparagine glycan. Disulfide bonds link cysteine 28–cysteine 288 and cysteine 110–cysteine 187. A helical transmembrane segment spans residues 40 to 60 (LPVFYMIVFVLGLSGNGVVIF). Over 61-78 (TVWKAKPKRRSADTYIGN) the chain is Cytoplasmic. A helical transmembrane segment spans residues 79–99 (LALADLAFVVTLPLWATYTAL). Topologically, residues 100-112 (GFHWPFGSALCKL) are extracellular. Residues 113–133 (SSYLVLLNMFASVFCLTCLSF) form a helical membrane-spanning segment. At 134 to 153 (DRYLAIVHSLSSAKLRSRSS) the chain is on the cytoplasmic side. The helical transmembrane segment at 154–174 (ILVSLAVIWLFSGLLALPSLI) threads the bilayer. At 175–201 (LRDTRVEGNNTICDLDFSGVSSKENEN) the chain is on the extracellular side. The N-linked (GlcNAc...) asparagine glycan is linked to asparagine 183. The helical transmembrane segment at 202–222 (FWIGGLSILTTVPGFLLPLLL) threads the bilayer. The Cytoplasmic segment spans residues 223–250 (MTIFYCFIGGKVTMHFQNLKKEEQKKKR). Residues 251-271 (LLKIIITLVVVFAICWLPFHI) form a helical membrane-spanning segment. Residues 272–298 (LKTIHFLDLMGFLELSCSTQNIIVSLH) are Extracellular-facing. Residues 299-319 (PYATCLAYINSCLNPFLYAFF) form a helical membrane-spanning segment. Over 320–364 (DLRFRSQCFFFFGFKKALQGHLSNTSSSLSAQTQKSEIHSLATKV) the chain is Cytoplasmic.

Belongs to the G-protein coupled receptor 1 family.

Its subcellular location is the cell membrane. Its function is as follows. G protein-coupled receptor for peptide hormones apelin (apln) and apelin receptor early endogenous ligand (apela), that plays a role in the regulation of normal cardiovascular function and fluid homeostasis. When acting as apelin receptor, activates both G(i) protein pathway that inhibits adenylate cyclase activity, and the beta-arrestin pathway that promotes internalization of the receptor. Also functions as mechanoreceptor that is activated by pathological stimuli in a G-protein-independent fashion to induce beta-arrestin signaling, hence eliciting cardiac hypertrophy. However, the presence of apelin ligand blunts cardiac hypertrophic induction from APLNR/APJ on response to pathological stimuli. Plays a key role in early development such as gastrulation, blood vessels formation and heart morphogenesis by acting as a receptor for apela hormone, promoting endoderm and mesendoderm cell migration and regulating the migration of cells fated to become myocardial progenitors, respectively. Promotes angioblast migration toward the embryonic midline, i.e. the position of the future vessel formation, during vasculogenesis. May promote sinus venosus (SV)-derived endothelial cells migration into the developing heart to promote coronary blood vessel development. Required for cardiovascular development, particularly for intersomitic vein angiogenesis. Plays also a role in various processes in adults such as regulation of blood vessel formation, blood pressure, heart contractility, and heart failure. Acts upstream of the i/o type of G-alpha proteins in the differentiation of endothelium, erythroid cells, myeloid cells and cardiomyocytes. In Xenopus tropicalis (Western clawed frog), this protein is Apelin receptor (aplnr).